The following is a 501-amino-acid chain: Beta-glucosidase 25 (501 aa).

The N-terminal stretch at 1 to 19 (MSLLTLVHILVSFSACVEA) is a signal peptide. Position 39 (Q39) interacts with a beta-D-glucoside. An N-linked (GlcNAc...) asparagine glycan is attached at N107. Residues H140 and 185-186 (NE) contribute to the a beta-D-glucoside site. E186 serves as the catalytic Proton donor. Cysteines 205 and 213 form a disulfide. A beta-D-glucoside is bound by residues Y329, E402, W452, 459 to 460 (EW), and F468. Catalysis depends on E402, which acts as the Nucleophile. Residue N478 is glycosylated (N-linked (GlcNAc...) asparagine).

It belongs to the glycosyl hydrolase 1 family.

It carries out the reaction Hydrolysis of terminal, non-reducing beta-D-glucosyl residues with release of beta-D-glucose.. The polypeptide is Beta-glucosidase 25 (BGLU25) (Oryza sativa subsp. japonica (Rice)).